Reading from the N-terminus, the 337-residue chain is Cysteine synthase 3 (337 aa).

K47 is subject to N6-(pyridoxal phosphate)lysine. Pyridoxal 5'-phosphate is bound by residues N78, 182 to 186, and S270; that span reads GSSGT.

The protein belongs to the cysteine synthase/cystathionine beta-synthase family. In terms of assembly, homodimer. Requires pyridoxal 5'-phosphate as cofactor.

It carries out the reaction O-acetyl-L-serine + hydrogen sulfide = L-cysteine + acetate. The protein operates within amino-acid biosynthesis; L-cysteine biosynthesis; L-cysteine from L-serine: step 2/2. In terms of biological role, primarily catalyzes the formation of cysteine and acetate from O-acetylserine and hydrogen sulfide. Can also catalyze the formation of cysteine and acetate from S-sulfocysteine and hydrogen sulfide and the formation of cyanoalanine and hydrogen sulfide from either S-sulfocysteine or O-acetylserine and hydrogen cyanide. The sequence is that of Cysteine synthase 3 from Caenorhabditis elegans.